The sequence spans 420 residues: UDP-N-acetylglucosamine 1-carboxyvinyltransferase (420 aa).

Residue 22-23 (KN) participates in phosphoenolpyruvate binding. R94 lines the UDP-N-acetyl-alpha-D-glucosamine pocket. C118 serves as the catalytic Proton donor. At C118 the chain carries 2-(S-cysteinyl)pyruvic acid O-phosphothioketal. Positions 307 and 329 each coordinate UDP-N-acetyl-alpha-D-glucosamine.

It belongs to the EPSP synthase family. MurA subfamily.

It localises to the cytoplasm. The catalysed reaction is phosphoenolpyruvate + UDP-N-acetyl-alpha-D-glucosamine = UDP-N-acetyl-3-O-(1-carboxyvinyl)-alpha-D-glucosamine + phosphate. It functions in the pathway cell wall biogenesis; peptidoglycan biosynthesis. Functionally, cell wall formation. Adds enolpyruvyl to UDP-N-acetylglucosamine. The chain is UDP-N-acetylglucosamine 1-carboxyvinyltransferase from Granulibacter bethesdensis (strain ATCC BAA-1260 / CGDNIH1).